The primary structure comprises 489 residues: Betaine aldehyde dehydrogenase (489 aa).

Residues Thr26 and Asp93 each coordinate K(+). NAD(+) is bound at residue 150–152 (GAW). Lys162 serves as the catalytic Charge relay system. 176–179 (KPSE) lines the NAD(+) pocket. Val180 lines the K(+) pocket. Residue 229 to 232 (GVET) coordinates NAD(+). A K(+)-binding site is contributed by Leu245. The active-site Proton acceptor is the Glu251. The NAD(+) site is built by Gly253, Cys285, and Glu386. Catalysis depends on Cys285, which acts as the Nucleophile. Cys285 is subject to Cysteine sulfenic acid (-SOH). Positions 456 and 459 each coordinate K(+). The active-site Charge relay system is the Glu463.

The protein belongs to the aldehyde dehydrogenase family. In terms of assembly, dimer of dimers. Requires K(+) as cofactor.

It catalyses the reaction betaine aldehyde + NAD(+) + H2O = glycine betaine + NADH + 2 H(+). Its pathway is amine and polyamine biosynthesis; betaine biosynthesis via choline pathway; betaine from betaine aldehyde: step 1/1. In terms of biological role, involved in the biosynthesis of the osmoprotectant glycine betaine. Catalyzes the irreversible oxidation of betaine aldehyde to the corresponding acid. This Burkholderia cenocepacia (strain ATCC BAA-245 / DSM 16553 / LMG 16656 / NCTC 13227 / J2315 / CF5610) (Burkholderia cepacia (strain J2315)) protein is Betaine aldehyde dehydrogenase.